The chain runs to 451 residues: Probable carboxypeptidase PMAA_093910 (451 aa).

The signal sequence occupies residues 1–19 (MKVSSLLPSVLLLVGATRA). Residue N149 is glycosylated (N-linked (GlcNAc...) asparagine). A Zn(2+)-binding site is contributed by D171. E203 acts as the Proton acceptor in catalysis. E204 lines the Zn(2+) pocket. N354 carries N-linked (GlcNAc...) asparagine glycosylation.

The protein belongs to the peptidase M20A family. Requires Zn(2+) as cofactor.

It is found in the secreted. The protein is Probable carboxypeptidase PMAA_093910 of Talaromyces marneffei (strain ATCC 18224 / CBS 334.59 / QM 7333) (Penicillium marneffei).